The primary structure comprises 81 residues: Conotoxin Cl9.6 (81 aa).

Residues 1–20 (MSTLGMTLLILLLLLPLATP) form the signal peptide. A propeptide spanning residues 21 to 40 (DDVGQPPKRDTLRNLLKIGT) is cleaved from the precursor. 3 disulfides stabilise this stretch: cysteine 46–cysteine 69, cysteine 54–cysteine 76, and cysteine 60–cysteine 78.

Expressed by the venom duct.

It localises to the secreted. The polypeptide is Conotoxin Cl9.6 (Californiconus californicus (California cone)).